The following is a 619-amino-acid chain: Bifunctional glutathionylspermidine synthetase/amidase (619 aa).

A gsp amidase region spans residues 2–195 (SKGTTSQDAP…LGWMIQTEDT (194 aa)). The Peptidase C51 domain occupies 34–176 (DPQEYEDDAV…MVVENGCYTL (143 aa)). Gln58 lines the glutathionylspermidine pocket. Cys59 functions as the S-(gamma-glutamyl-cysteinyl-glycyl)-cysteine intermediate in the catalytic mechanism. Cys59 bears the Cysteine sulfenic acid (-SOH); transient mark. Glutathionylspermidine-binding positions include Arg64, 78-81 (VGMA), and Asn149. The tract at residues 196 to 205 (EYSLPQPEIA) is linker. A gsp synthetase region spans residues 206–619 (GELLKISGAR…DIEPLIVVKK (414 aa)). Glutathione is bound at residue Arg316. Residue 316–318 (RMD) participates in ATP binding. Asp318, Glu330, and Asn332 together coordinate Mg(2+). Ser335 is a binding site for glutathione. Position 391 (Glu391) interacts with spermidine. Glutathione contacts are provided by Glu392 and Thr446. ATP-binding positions include Lys498, Lys533, 539–540 (CG), 568–571 (QQLW), Gln582, and 603–605 (LVI). Asp610 is a spermidine binding site.

It in the C-terminal section; belongs to the glutathionylspermidine synthase preATP-grasp family. Homodimer. Post-translationally, oxidation of Cys-59 to sulfenic acid during oxidative stress selectively inhibits the amidase activity which leads to a rapid increase in the amounts of intracellular Gsp and Gsp S-thiolated proteins (GspSSPs).

The enzyme catalyses spermidine + glutathione + ATP = glutathionylspermidine + ADP + phosphate + H(+). The catalysed reaction is glutathionylspermidine + H2O = spermidine + glutathione. It functions in the pathway sulfur metabolism; glutathione metabolism. Its pathway is amine and polyamine metabolism; spermidine metabolism. With respect to regulation, when exposed to oxidative stress, Gsp amidase activity is transiently inhibited in vivo by oxidation of the catalytic Cys-59 thiol to sulfenic acid; this modification does not affect Gsp synthetase activity. Gsp amidase activity is negatively autoregulated by the Gsp synthetase domain, and is activated by the Gsp synthetase substrates, GSH and ATP-Mg(2+); the occupancy of the synthetase active site may initiate communication through the protein as manifest by the release of inhibition of the amidase activity. A tetrahedral phosphonate analog of glutathionylspermidine, designed as a mimic of the proposed tetrahedral intermediate for either reaction, inhibits the synthetase activity (Ki of 10 uM) but does not inhibit the amidase activity. Amidase activity is inhibited by iodoacetamide in vitro. Functionally, catalyzes the formation of an amide bond between glutathione (GSH) and spermidine coupled with hydrolysis of ATP; also catalyzes the opposing reaction, i.e. the hydrolysis of glutathionylspermidine (Gsp) back to glutathione and spermidine. The amidase active site can also hydrolyze Gsp-disulfide (Gsp-S-S-Gsp) to Gsp-SG and Gsp S-thiolated proteins (GspSSPs) to GSH S-thiolated protein (GSSPs). Likely acts synergistically with glutaredoxin to regulate the redox environment of E.coli and defend against oxidative damage. In vitro, the amidase active site also catalyzes hydrolysis of amide and ester derivatives of glutathione (e.g. glutathione ethyl ester and glutathione amide) but lacks activity toward acetylspermidine (N1 and N8) and acetylspermine (N1). In Escherichia coli (strain K12), this protein is Bifunctional glutathionylspermidine synthetase/amidase (gss).